The chain runs to 433 residues: tRNA-2-methylthio-N(6)-dimethylallyladenosine synthase (433 aa).

Residues 3 to 118 enclose the MTTase N-terminal domain; the sequence is KKLFIQTLGC…ITKAVNTPKF (116 aa). The [4Fe-4S] cluster site is built by Cys-12, Cys-49, Cys-81, Cys-150, Cys-154, and Cys-157. In terms of domain architecture, Radical SAM core spans 136 to 369; sequence RGSPYKSHIN…QNRHSEILDE (234 aa). The region spanning 372-433 is the TRAM domain; sequence AAQKDKIFDV…RMVLYGELQI (62 aa).

The protein belongs to the methylthiotransferase family. MiaB subfamily. As to quaternary structure, monomer. [4Fe-4S] cluster serves as cofactor.

Its subcellular location is the cytoplasm. It catalyses the reaction N(6)-dimethylallyladenosine(37) in tRNA + (sulfur carrier)-SH + AH2 + 2 S-adenosyl-L-methionine = 2-methylsulfanyl-N(6)-dimethylallyladenosine(37) in tRNA + (sulfur carrier)-H + 5'-deoxyadenosine + L-methionine + A + S-adenosyl-L-homocysteine + 2 H(+). In terms of biological role, catalyzes the methylthiolation of N6-(dimethylallyl)adenosine (i(6)A), leading to the formation of 2-methylthio-N6-(dimethylallyl)adenosine (ms(2)i(6)A) at position 37 in tRNAs that read codons beginning with uridine. This is tRNA-2-methylthio-N(6)-dimethylallyladenosine synthase from Campylobacter concisus (strain 13826).